We begin with the raw amino-acid sequence, 499 residues long: GTPase Der (499 aa).

2 consecutive EngA-type G domains span residues 3-166 and 213-386; these read PVVA…LETL and IKFA…QSAT. GTP contacts are provided by residues 9-16, 56-60, 118-121, 219-226, 266-270, and 331-334; these read GRPNVGKS, DTGGI, NKTD, DTAGV, and NKWD. The KH-like domain occupies 387–471; the sequence is RRTSTAMLTR…PIRVEFQESA (85 aa). The interval 476–499 is disordered; sequence GRKNTMTLSQERQRKRLLKAKTKK. Over residues 488-499 the composition is skewed to basic residues; that stretch reads QRKRLLKAKTKK.

Belongs to the TRAFAC class TrmE-Era-EngA-EngB-Septin-like GTPase superfamily. EngA (Der) GTPase family. As to quaternary structure, associates with the 50S ribosomal subunit.

Functionally, GTPase that plays an essential role in the late steps of ribosome biogenesis. The protein is GTPase Der of Aeromonas salmonicida (strain A449).